The following is a 350-amino-acid chain: Putative aminopeptidase MJ0555 (350 aa).

His62 and Asp175 together coordinate a divalent metal cation. Catalysis depends on Glu207, which acts as the Proton acceptor. The a divalent metal cation site is built by Glu208, Asp230, and His321.

It belongs to the peptidase M42 family. The cofactor is a divalent metal cation.

This is Putative aminopeptidase MJ0555 from Methanocaldococcus jannaschii (strain ATCC 43067 / DSM 2661 / JAL-1 / JCM 10045 / NBRC 100440) (Methanococcus jannaschii).